The primary structure comprises 371 residues: uncharacterized protein (371 aa).

Transmembrane regions (helical) follow at residues 9 to 29 (FTLD…VFLI), 58 to 78 (VLAF…FLAI), 98 to 118 (LIVA…SFIF), 133 to 153 (LAPF…VSVI), 159 to 179 (YDVN…ALAA), 183 to 203 (ISNF…IGDW), and 330 to 350 (IIEI…MVVV).

This sequence belongs to the MscS (TC 1.A.23) family.

Its subcellular location is the cell membrane. Functionally, may play a role in resistance to osmotic downshock. This is an uncharacterized protein from Bacillus subtilis (strain 168).